The sequence spans 407 residues: Bifunctional enzyme IspD/IspF (407 aa).

The tract at residues 1 to 247 is 2-C-methyl-D-erythritol 4-phosphate cytidylyltransferase; that stretch reads MVHIQADGAR…RLSHNALPDV (247 aa). Residues 248-407 form a 2-C-methyl-D-erythritol 2,4-cyclodiphosphate synthase region; it reads RTGNGYDVHQ…ATVVFQGKPQ (160 aa). 2 residues coordinate a divalent metal cation: aspartate 254 and histidine 256. Residues 254–256 and 280–281 contribute to the 4-CDP-2-C-methyl-D-erythritol 2-phosphate site; these read DVH and HS. Histidine 288 provides a ligand contact to a divalent metal cation. Residues 302 to 304, 378 to 381, phenylalanine 385, and arginine 388 each bind 4-CDP-2-C-methyl-D-erythritol 2-phosphate; these read DIG and TTNE.

It in the N-terminal section; belongs to the IspD/TarI cytidylyltransferase family. IspD subfamily. In the C-terminal section; belongs to the IspF family. A divalent metal cation is required as a cofactor.

It catalyses the reaction 2-C-methyl-D-erythritol 4-phosphate + CTP + H(+) = 4-CDP-2-C-methyl-D-erythritol + diphosphate. The enzyme catalyses 4-CDP-2-C-methyl-D-erythritol 2-phosphate = 2-C-methyl-D-erythritol 2,4-cyclic diphosphate + CMP. It participates in isoprenoid biosynthesis; isopentenyl diphosphate biosynthesis via DXP pathway; isopentenyl diphosphate from 1-deoxy-D-xylulose 5-phosphate: step 2/6. The protein operates within isoprenoid biosynthesis; isopentenyl diphosphate biosynthesis via DXP pathway; isopentenyl diphosphate from 1-deoxy-D-xylulose 5-phosphate: step 4/6. Functionally, bifunctional enzyme that catalyzes the formation of 4-diphosphocytidyl-2-C-methyl-D-erythritol from CTP and 2-C-methyl-D-erythritol 4-phosphate (MEP) (IspD), and catalyzes the conversion of 4-diphosphocytidyl-2-C-methyl-D-erythritol 2-phosphate (CDP-ME2P) to 2-C-methyl-D-erythritol 2,4-cyclodiphosphate (ME-CPP) with a corresponding release of cytidine 5-monophosphate (CMP) (IspF). This is Bifunctional enzyme IspD/IspF from Allorhizobium ampelinum (strain ATCC BAA-846 / DSM 112012 / S4) (Agrobacterium vitis (strain S4)).